We begin with the raw amino-acid sequence, 289 residues long: MSWLQKLLPPKINRPAGNSRKTVPEGLWSKCPSCESVLYRTDLESNSEVCPKCSYHNRISARTRLNFLLDAEGRSEIGMEVQPVDPLKFKDSKRYIDRLKTTQAEVGETDALIVMQGSIKAVGVVAAAFEFKFMGGSMGSVVGERFVRGVQAAIDNNTPFICVSASGGARMQEGMFSLMQMAKTSAALTRLSKAGLPYISVLTDPTMGGVSASFAMLGDVIIAEPQALIGFAGPRVIEQTVRETLPEGFQRSEFLLEHGAIDMIVDRREMRDKLATLMTSFMRVPAGAA.

Positions Leu27 to Ala289 constitute a CoA carboxyltransferase N-terminal domain. The Zn(2+) site is built by Cys31, Cys34, Cys50, and Cys53. The C4-type zinc finger occupies Cys31–Cys53.

The protein belongs to the AccD/PCCB family. In terms of assembly, acetyl-CoA carboxylase is a heterohexamer composed of biotin carboxyl carrier protein (AccB), biotin carboxylase (AccC) and two subunits each of ACCase subunit alpha (AccA) and ACCase subunit beta (AccD). Zn(2+) is required as a cofactor.

It is found in the cytoplasm. It catalyses the reaction N(6)-carboxybiotinyl-L-lysyl-[protein] + acetyl-CoA = N(6)-biotinyl-L-lysyl-[protein] + malonyl-CoA. The protein operates within lipid metabolism; malonyl-CoA biosynthesis; malonyl-CoA from acetyl-CoA: step 1/1. Functionally, component of the acetyl coenzyme A carboxylase (ACC) complex. Biotin carboxylase (BC) catalyzes the carboxylation of biotin on its carrier protein (BCCP) and then the CO(2) group is transferred by the transcarboxylase to acetyl-CoA to form malonyl-CoA. This Methylobacillus flagellatus (strain ATCC 51484 / DSM 6875 / VKM B-1610 / KT) protein is Acetyl-coenzyme A carboxylase carboxyl transferase subunit beta.